The chain runs to 396 residues: S-adenosylmethionine synthase (396 aa).

His-16 contacts ATP. Position 18 (Asp-18) interacts with Mg(2+). Glu-44 is a binding site for K(+). L-methionine contacts are provided by Glu-57 and Gln-100. A flexible loop region spans residues 100-110 (QSPDIAQGVDR). ATP is bound by residues 167-169 (DAK), 232-233 (RF), Asp-241, 247-248 (RK), Ala-264, and Lys-268. Asp-241 provides a ligand contact to L-methionine. Lys-272 lines the L-methionine pocket.

The protein belongs to the AdoMet synthase family. In terms of assembly, homotetramer; dimer of dimers. Requires Mg(2+) as cofactor. K(+) is required as a cofactor.

Its subcellular location is the cytoplasm. The enzyme catalyses L-methionine + ATP + H2O = S-adenosyl-L-methionine + phosphate + diphosphate. It participates in amino-acid biosynthesis; S-adenosyl-L-methionine biosynthesis; S-adenosyl-L-methionine from L-methionine: step 1/1. Its function is as follows. Catalyzes the formation of S-adenosylmethionine (AdoMet) from methionine and ATP. The overall synthetic reaction is composed of two sequential steps, AdoMet formation and the subsequent tripolyphosphate hydrolysis which occurs prior to release of AdoMet from the enzyme. This chain is S-adenosylmethionine synthase, found in Ralstonia pickettii (strain 12J).